The primary structure comprises 260 residues: HTH-type transcriptional repressor NanR (260 aa).

Residues 1-20 (MNPFDSQSEDASDAIGRSLG) form a disordered region. An HTH gntR-type domain is found at 27-95 (KKLSEMVEEE…NGERARVSRP (69 aa)). Residues 55–74 (ERELMAFFNVGRPSVREALA) constitute a DNA-binding region (H-T-H motif).

Belongs to the NanR family.

Transcriptional repressor that controls expression of the genes required for the catabolism of sialic acids. The sequence is that of HTH-type transcriptional repressor NanR from Cronobacter sakazakii (strain ATCC BAA-894) (Enterobacter sakazakii).